Here is a 164-residue protein sequence, read N- to C-terminus: Pheromone-binding protein (164 aa).

Residues 1–22 form the signal peptide; that stretch reads MSIQGQIALALMVNMAVGSVDA. 3 disulfide bridges follow: Cys41–Cys76, Cys72–Cys130, and Cys119–Cys139.

It belongs to the PBP/GOBP family. In terms of assembly, homodimer. In terms of tissue distribution, antenna.

Its function is as follows. This major soluble protein in olfactory sensilla of male moths serves to solubilize the extremely hydrophobic pheromone molecules such as bombykol and to transport pheromone through the aqueous lymph to receptors located on olfactory cilia. The protein is Pheromone-binding protein of Bombyx mori (Silk moth).